We begin with the raw amino-acid sequence, 572 residues long: Proline--tRNA ligase (572 aa).

It belongs to the class-II aminoacyl-tRNA synthetase family. ProS type 1 subfamily. In terms of assembly, homodimer.

Its subcellular location is the cytoplasm. The enzyme catalyses tRNA(Pro) + L-proline + ATP = L-prolyl-tRNA(Pro) + AMP + diphosphate. In terms of biological role, catalyzes the attachment of proline to tRNA(Pro) in a two-step reaction: proline is first activated by ATP to form Pro-AMP and then transferred to the acceptor end of tRNA(Pro). As ProRS can inadvertently accommodate and process non-cognate amino acids such as alanine and cysteine, to avoid such errors it has two additional distinct editing activities against alanine. One activity is designated as 'pretransfer' editing and involves the tRNA(Pro)-independent hydrolysis of activated Ala-AMP. The other activity is designated 'posttransfer' editing and involves deacylation of mischarged Ala-tRNA(Pro). The misacylated Cys-tRNA(Pro) is not edited by ProRS. The polypeptide is Proline--tRNA ligase (Salmonella schwarzengrund (strain CVM19633)).